We begin with the raw amino-acid sequence, 343 residues long: Glucokinase (343 aa).

ATP is bound at residue 18 to 23; it reads GDIGGT.

The protein belongs to the bacterial glucokinase family.

The protein localises to the cytoplasm. It catalyses the reaction D-glucose + ATP = D-glucose 6-phosphate + ADP + H(+). The polypeptide is Glucokinase (Brucella melitensis biotype 1 (strain ATCC 23456 / CCUG 17765 / NCTC 10094 / 16M)).